The primary structure comprises 412 residues: COP9 signalosome complex subunit 4 (412 aa).

One can recognise a PCI domain in the interval 216 to 378; sequence EAAQRYYELS…GILHFEDSNP (163 aa).

This sequence belongs to the CSN4 family. As to quaternary structure, component of the CSN complex, probably composed of csn-1, csn-2, csn-3, csn-4, csn-5, csn-6 and csn-7. Within the complex it probably interacts directly with csn-2 and csn-4. In the complex, it probably interacts directly with csn-1, csn-2, csn-3 and csn-6. Interacts with itself.

It localises to the cytoplasm. It is found in the nucleus. Its function is as follows. Component of the COP9 signalosome complex (CSN), a complex involved in various cellular and developmental processes. The CSN complex is an essential regulator of the ubiquitin (Ubl) conjugation pathway by mediating the deneddylation of the cullin subunits of the SCF-type E3 ligase complexes, leading to decrease the Ubl ligase activity of SCF. The CSN complex plays an essential role in embryogenesis and oogenesis and is required to regulate microtubule stability in the early embryo. Mediates mei-3/katanin targeting for degradation at the meiosis to mitosis transition via deneddylation of cul-3. The chain is COP9 signalosome complex subunit 4 (csn-4) from Caenorhabditis elegans.